Here is a 73-residue protein sequence, read N- to C-terminus: Translation initiation factor IF-1 (73 aa).

Positions 1–72 (MSKKDVIELE…SRGRIVYRKK (72 aa)) constitute an S1-like domain.

It belongs to the IF-1 family. Component of the 30S ribosomal translation pre-initiation complex which assembles on the 30S ribosome in the order IF-2 and IF-3, IF-1 and N-formylmethionyl-tRNA(fMet); mRNA recruitment can occur at any time during PIC assembly.

The protein resides in the cytoplasm. Functionally, one of the essential components for the initiation of protein synthesis. Stabilizes the binding of IF-2 and IF-3 on the 30S subunit to which N-formylmethionyl-tRNA(fMet) subsequently binds. Helps modulate mRNA selection, yielding the 30S pre-initiation complex (PIC). Upon addition of the 50S ribosomal subunit IF-1, IF-2 and IF-3 are released leaving the mature 70S translation initiation complex. This is Translation initiation factor IF-1 from Fusobacterium nucleatum subsp. nucleatum (strain ATCC 25586 / DSM 15643 / BCRC 10681 / CIP 101130 / JCM 8532 / KCTC 2640 / LMG 13131 / VPI 4355).